Consider the following 151-residue polypeptide: Ribonuclease H (151 aa).

The RNase H type-1 domain maps to 1–141; it reads MKHVDIFTDG…ADELARRGME (141 aa). Residues Asp-9, Glu-47, Asp-69, and Asp-133 each coordinate Mg(2+).

The protein belongs to the RNase H family. As to quaternary structure, monomer. Mg(2+) serves as cofactor.

The protein resides in the cytoplasm. It catalyses the reaction Endonucleolytic cleavage to 5'-phosphomonoester.. Endonuclease that specifically degrades the RNA of RNA-DNA hybrids. The polypeptide is Ribonuclease H (Rhizobium etli (strain ATCC 51251 / DSM 11541 / JCM 21823 / NBRC 15573 / CFN 42)).